Here is a 309-residue protein sequence, read N- to C-terminus: Tagatose-6-phosphate kinase (309 aa).

It belongs to the carbohydrate kinase PfkB family. LacC subfamily.

The catalysed reaction is D-tagatofuranose 6-phosphate + ATP = D-tagatofuranose 1,6-bisphosphate + ADP + H(+). The protein operates within carbohydrate metabolism; D-tagatose 6-phosphate degradation; D-glyceraldehyde 3-phosphate and glycerone phosphate from D-tagatose 6-phosphate: step 1/2. This is Tagatose-6-phosphate kinase from Streptococcus pyogenes serotype M6 (strain ATCC BAA-946 / MGAS10394).